The chain runs to 160 residues: Phosphopantetheine adenylyltransferase (160 aa).

Thr-10 is a substrate binding site. Residues 10 to 11 (TF) and His-18 each bind ATP. The substrate site is built by Lys-42, Met-74, and Arg-88. ATP is bound by residues 89–91 (GLR), Glu-99, and 124–130 (LSFLSSS).

Belongs to the bacterial CoaD family. Homohexamer. Requires Mg(2+) as cofactor.

Its subcellular location is the cytoplasm. It carries out the reaction (R)-4'-phosphopantetheine + ATP + H(+) = 3'-dephospho-CoA + diphosphate. Its pathway is cofactor biosynthesis; coenzyme A biosynthesis; CoA from (R)-pantothenate: step 4/5. In terms of biological role, reversibly transfers an adenylyl group from ATP to 4'-phosphopantetheine, yielding dephospho-CoA (dPCoA) and pyrophosphate. This chain is Phosphopantetheine adenylyltransferase, found in Photorhabdus laumondii subsp. laumondii (strain DSM 15139 / CIP 105565 / TT01) (Photorhabdus luminescens subsp. laumondii).